Consider the following 890-residue polypeptide: Translation initiation factor IF-2 (890 aa).

Disordered regions lie at residues 31–164 and 189–266; these read KLAQ…PAEP and FKAP…ESLK. Residues 42–54 are compositionally biased toward basic and acidic residues; it reads SSSEKPSAKEKSV. Residues 55–72 are compositionally biased toward low complexity; that stretch reads KVALAATSTPTASAEQAS. Over residues 114-128 the composition is skewed to acidic residues; the sequence is PEPELEVVDEVCDES. Basic and acidic residues-rich tracts occupy residues 149 to 163 and 242 to 266; these read PQEKELEPKPVKPAE and PKRDAGKKNLTDFRDRSKKSDESLK. In terms of domain architecture, tr-type G spans 395–564; the sequence is IRSPIVAFMG…ALQAEVLELK (170 aa). Residues 404 to 411 form a G1 region; sequence GHVDHGKT. 404–411 is a GTP binding site; the sequence is GHVDHGKT. Positions 429 to 433 are G2; the sequence is AITQH. A G3 region spans residues 450–453; sequence DTPG. GTP is bound by residues 450–454 and 504–507; these read DTPGH and NKCD. The segment at 504-507 is G4; that stretch reads NKCD. The segment at 540–542 is G5; it reads SAK.

Belongs to the TRAFAC class translation factor GTPase superfamily. Classic translation factor GTPase family. IF-2 subfamily.

It localises to the cytoplasm. In terms of biological role, one of the essential components for the initiation of protein synthesis. Protects formylmethionyl-tRNA from spontaneous hydrolysis and promotes its binding to the 30S ribosomal subunits. Also involved in the hydrolysis of GTP during the formation of the 70S ribosomal complex. This is Translation initiation factor IF-2 (infB) from Chlamydia pneumoniae (Chlamydophila pneumoniae).